The following is an 86-amino-acid chain: Small ribosomal subunit protein bS16 (86 aa).

It belongs to the bacterial ribosomal protein bS16 family.

The protein is Small ribosomal subunit protein bS16 of Xanthomonas campestris pv. campestris (strain 8004).